The primary structure comprises 245 residues: MGCSECCVRCLGGVPYASLIATILCFVGVALFCGCGHEALTGTEKLIELYFSNDFMDYALLVNVIQVFQYIIYGTASFSFLYGVLLLAEGFYTTSAVKALFGEFRTTVCGRCVSATFIFLTYALGVTWMGVFAFSALPVYIYYTMWSTCQMVKYVTENGTGFDDICVDARQYGILPWNASPGKICGLSLAAVCNTSEFELTYHLFIATFAGAAATVIALLTYMMSSTYNYAVLKFLSRDDCCTKF.

The next 4 helical transmembrane spans lie at 19-35 (LIAT…FCGC), 71-87 (IIYG…VLLL), 117-133 (FIFL…GVFA), and 204-220 (LFIA…IALL).

It belongs to the myelin proteolipid protein family. Highly expressed in white matter in myelinating shark brain.

Its subcellular location is the membrane. The protein is Proteolipid protein DM alpha of Squalus acanthias (Spiny dogfish).